Consider the following 176-residue polypeptide: Deoxyuridine 5'-triphosphate nucleotidohydrolase (176 aa).

Substrate contacts are provided by residues 67 to 69 (RSG), N80, 84 to 86 (TVD), and K94. The interval 141–176 (GGFGSTGGHASVDGAEGGITHGGNSYASVVSDREGQ) is disordered.

It belongs to the dUTPase family. Mg(2+) serves as cofactor.

The enzyme catalyses dUTP + H2O = dUMP + diphosphate + H(+). The protein operates within pyrimidine metabolism; dUMP biosynthesis; dUMP from dCTP (dUTP route): step 2/2. In terms of biological role, this enzyme is involved in nucleotide metabolism: it produces dUMP, the immediate precursor of thymidine nucleotides and it decreases the intracellular concentration of dUTP so that uracil cannot be incorporated into DNA. The polypeptide is Deoxyuridine 5'-triphosphate nucleotidohydrolase (Streptomyces griseus subsp. griseus (strain JCM 4626 / CBS 651.72 / NBRC 13350 / KCC S-0626 / ISP 5235)).